Here is a 281-residue protein sequence, read N- to C-terminus: Alcohol dehydrogenase-related 31 kDa protein (281 aa).

11–34 provides a ligand contact to NAD(+); sequence YVADCGGIALETSKVLMTKNIAKL. Ser139 contributes to the substrate binding site. The active-site Proton acceptor is Tyr152.

The protein belongs to the short-chain dehydrogenases/reductases (SDR) family.

The chain is Alcohol dehydrogenase-related 31 kDa protein (Adhr) from Drosophila ambigua (Fruit fly).